An 800-amino-acid polypeptide reads, in one-letter code: Heterogeneous nuclear ribonucleoprotein U (800 aa).

An N-acetylserine modification is found at S2. Position 4 is a phosphoserine (S4). The SAP domain occupies 8 to 42; sequence VKKLKVSELKEELKKRRLSDKGLKADLMDRLQAAL. An N6-acetyllysine mark is found at K17 and K21. Positions 41–257 are disordered; it reads ALDNEAGGRP…PQPPVEEEDE (217 aa). The residue at position 58 (S58) is a Phosphoserine. Composition is skewed to low complexity over residues 71–80 and 103–113; these read AGLEQEAAAG and ENGAAGAADAG. Acidic residues-rich tracts occupy residues 114-128 and 134-147; these read AMEE…ENGD and EGED…EGAG. The span at 153–173 shows a compositional bias: low complexity; sequence GEQQSQPPAAAAQQQPSQQRG. K181 carries the post-translational modification N6-acetyllysine. Position 182 is an ADP-ribosylserine (S182). Over residues 194–205 the composition is skewed to low complexity; that stretch reads APPGARQGQQQA. The span at 209-242 shows a compositional bias: basic and acidic residues; that stretch reads GKTEQKGGDKKRGVKRPREDHGRGYFEYIEENKY. R231 bears the Citrulline mark. K241 carries the post-translational modification N6-acetyllysine; alternate. A Glycyl lysine isopeptide (Lys-Gly) (interchain with G-Cter in SUMO1); alternate cross-link involves residue K241. K241 participates in a covalent cross-link: Glycyl lysine isopeptide (Lys-Gly) (interchain with G-Cter in SUMO2); alternate. Position 242 is a phosphotyrosine (Y242). S243 and S247 each carry phosphoserine. In terms of domain architecture, B30.2/SPRY spans 244–440; it reads RAKSPQPPVE…VEFNFGQKEK (197 aa). T262 is subject to Phosphothreonine. At K328 the chain carries N6-acetyllysine. Positions 464-648 are ATPase domain; the sequence is PKGPEEKKDC…QKLLEQYKEE (185 aa). Residue K471 forms a Glycyl lysine isopeptide (Lys-Gly) (interchain with G-Cter in SUMO2) linkage. 480–487 is a binding site for ATP; sequence GLPGAGKT. K492 and K500 each carry N6-acetyllysine; alternate. Glycyl lysine isopeptide (Lys-Gly) (interchain with G-Cter in SUMO2); alternate cross-links involve residues K492 and K500. T508 carries the phosphothreonine modification. K512 is covalently cross-linked (Glycyl lysine isopeptide (Lys-Gly) (interchain with G-Cter in SUMO2)). K527 bears the N6-acetyllysine mark. At K541 the chain carries N6-acetyllysine; alternate. K541 is covalently cross-linked (Glycyl lysine isopeptide (Lys-Gly) (interchain with G-Cter in SUMO2); alternate). K550 participates in a covalent cross-link: Glycyl lysine isopeptide (Lys-Gly) (interchain with G-Cter in SUMO2). T558 is subject to Phosphothreonine. Residues K585 and K602 each participate in a glycyl lysine isopeptide (Lys-Gly) (interchain with G-Cter in SUMO2) cross-link. Positions 587–602 are actin-binding; it reads EDYKQRTQKKAEVEGK. K611 is subject to N6-acetyllysine; alternate. K611 is covalently cross-linked (Glycyl lysine isopeptide (Lys-Gly) (interchain with G-Cter in SUMO2); alternate). A coiled-coil region spans residues 626-653; the sequence is DEITYVELQKEEAQKLLEQYKEESKKAL. Glycyl lysine isopeptide (Lys-Gly) (interchain with G-Cter in SUMO2) cross-links involve residues K640 and K646. Residues 647–659 are compositionally biased toward basic and acidic residues; that stretch reads EESKKALPPEKKQ. The disordered stretch occupies residues 647-729; that stretch reads EESKKALPPE…GSGGIGYPYP (83 aa). An Omega-N-methylarginine modification is found at R678. Over residues 686–704 the composition is skewed to gly residues; the sequence is GGFNMRGGNFRGGAPGNRG. The interval 690-715 is RNA-binding RGG-box; that stretch reads MRGGNFRGGAPGNRGGYNRRGNMPQR. Asymmetric dimethylarginine is present on residues R691, R696, and R703. An asymmetric dimethylarginine; alternate mark is found at R709 and R715. An omega-N-methylarginine; alternate mark is found at R709 and R715. Positions 715–725 are enriched in gly residues; that stretch reads RGGGGGSGGIG. R730 and R737 each carry asymmetric dimethylarginine. Residues 745-774 are disordered; the sequence is NYNRGGMPNRGNYNQNFRGRGNNRGYKNQS. K789 carries the N6-acetyllysine; alternate modification. Residue K789 forms a Glycyl lysine isopeptide (Lys-Gly) (interchain with G-Cter in SUMO2); alternate linkage.

As to quaternary structure, oligomer (via ATPase domain and RNA-binding RGG-box region); oligomerization occurs upon ATP-binding in a chromatin-associated RNAs (caRNAs)- and transcription-dependent manner and is required for chromatin decompaction. ATP hydrolysis is required to cycle from an oligomeric to monomeric state to compact chromatin. Component of the coding region determinant (CRD)-mediated complex, composed of DHX9, HNRNPU, IGF2BP1, SYNCRIP and YBX1. Identified in the spliceosome C complex. Identified in a IGF2BP1-dependent mRNP granule complex containing untranslated mRNAs. Associates with heterogeneous nuclear ribonucleoprotein (hnRNP) particles. Associates (via middle region) with the C-terminal domain (CTD) RNA polymerase II (Pol II) holoenzyme; this association occurs in a RNA-independent manner. Associates (via middle region) with the core-TFIIH basal transcription factor complex; this association inhibits the CTD phosphorylation of RNA polymerase II holoenzyme by down-regulating TFIIH kinase activity. Associates with the telomerase holoenzyme complex. Associates with spindle microtubules (MTs) in a TPX2-dependent manner. Interacts (via C-terminus) with actin; this interaction is direct and mediates association with the phosphorylated CTD of RNA polymerase II and is disrupted in presence of the long non-coding H19 RNA. Interacts with AURKA. Interacts (via C-terminus) with CBX5; this interaction is, at least in part, RNA-dependent. Interacts with CR2. Interacts with CRY1. Interacts (via C-terminus) with EP300; this interaction enhances DNA-binding to nuclear scaffold/matrix attachment region (S/MAR) elements. Interacts with ERBB4. Interacts with GEMIN5. Interacts with IGF2BP1. Interacts with IGF2BP2 and IGF2BP3. Interacts with NCL; this interaction occurs during mitosis. Interacts (via C-terminus) with NR3C1 (via C-terminus). Interacts with PLK1; this interaction induces phosphorylation of HNRNPU at Ser-58 in mitosis. Interacts with POU3F4. Interacts with SMARCA4; this interaction occurs in embryonic stem cells and stimulates global Pol II-mediated transcription. Interacts (via C-terminus) with TOP2A; this interaction protects the topoisomerase TOP2A from degradation and positively regulates the relaxation of supercoiled DNA by TOP2A in a RNA-dependent manner. Interacts with TPX2; this interaction recruits HNRNPU to spindle microtubules (MTs). Interacts with UBQLN2. Interacts (via RNA-binding RGG-box region) with ZBTB7B; the interaction facilitates the recruitment of long non-coding RNA Blnc1 by ZBTB7B. Interacts with ERCC6. In terms of processing, cleaved at Asp-94 by CASP3 during T-cell apoptosis, resulting in a loss of DNA- and chromatin-binding activities. Post-translationally, extensively phosphorylated. Phosphorylated on Ser-58 by PLK1 and dephosphorylated by protein phosphatase 2A (PP2A) in mitosis. Arg-709 and Arg-715 are dimethylated, probably to asymmetric dimethylarginine. In terms of processing, citrullinated by PADI4.

It localises to the nucleus. Its subcellular location is the nucleus matrix. The protein localises to the chromosome. The protein resides in the nucleus speckle. It is found in the cytoplasm. It localises to the cytoskeleton. Its subcellular location is the microtubule organizing center. The protein localises to the centrosome. The protein resides in the centromere. It is found in the kinetochore. It localises to the spindle. Its subcellular location is the spindle pole. The protein localises to the midbody. The protein resides in the cell surface. It is found in the cytoplasmic granule. Functionally, DNA- and RNA-binding protein involved in several cellular processes such as nuclear chromatin organization, telomere-length regulation, transcription, mRNA alternative splicing and stability, Xist-mediated transcriptional silencing and mitotic cell progression. Plays a role in the regulation of interphase large-scale gene-rich chromatin organization through chromatin-associated RNAs (caRNAs) in a transcription-dependent manner, and thereby maintains genomic stability. Required for the localization of the long non-coding Xist RNA on the inactive chromosome X (Xi) and the subsequent initiation and maintenance of X-linked transcriptional gene silencing during X-inactivation. Plays a role as a RNA polymerase II (Pol II) holoenzyme transcription regulator. Promotes transcription initiation by direct association with the core-TFIIH basal transcription factor complex for the assembly of a functional pre-initiation complex with Pol II in a actin-dependent manner. Blocks Pol II transcription elongation activity by inhibiting the C-terminal domain (CTD) phosphorylation of Pol II and dissociates from Pol II pre-initiation complex prior to productive transcription elongation. Positively regulates CBX5-induced transcriptional gene silencing and retention of CBX5 in the nucleus. Negatively regulates glucocorticoid-mediated transcriptional activation. Key regulator of transcription initiation and elongation in embryonic stem cells upon leukemia inhibitory factor (LIF) signaling. Involved in the long non-coding RNA H19-mediated Pol II transcriptional repression. Participates in the circadian regulation of the core clock component BMAL1 transcription. Plays a role in the regulation of telomere length. Plays a role as a global pre-mRNA alternative splicing modulator by regulating U2 small nuclear ribonucleoprotein (snRNP) biogenesis. Plays a role in mRNA stability. Component of the CRD-mediated complex that promotes MYC mRNA stabilization. Enhances the expression of specific genes, such as tumor necrosis factor TNFA, by regulating mRNA stability, possibly through binding to the 3'-untranslated region (UTR). Plays a role in mitotic cell cycle regulation. Involved in the formation of stable mitotic spindle microtubules (MTs) attachment to kinetochore, spindle organization and chromosome congression. Phosphorylation at Ser-58 by PLK1 is required for chromosome alignement and segregation and progression through mitosis. Also contributes to the targeting of AURKA to mitotic spindle MTs. Binds to double- and single-stranded DNA and RNA, poly(A), poly(C) and poly(G) oligoribonucleotides. Binds to chromatin-associated RNAs (caRNAs). Associates with chromatin to scaffold/matrix attachment region (S/MAR) elements in a chromatin-associated RNAs (caRNAs)-dependent manner. Binds (via RNA-binding RGG-box region) to the long non-coding Xist RNA; this binding is direct and bridges the Xist RNA and the inactive chromosome X (Xi). Binds the long non-coding H19 RNA. Binds to SMN1/2 pre-mRNAs at G/U-rich regions. Binds to small nuclear RNAs (snRNAs). Binds to the 3'-UTR of TNFA mRNA. Also negatively regulates embryonic stem cell differentiation upon LIF signaling. Required for embryonic development. Binds to brown fat long non-coding RNA 1 (Blnc1); facilitates the recruitment of Blnc1 by ZBTB7B required to drive brown and beige fat development and thermogenesis. This chain is Heterogeneous nuclear ribonucleoprotein U, found in Mus musculus (Mouse).